The primary structure comprises 486 residues: Probable FAD-binding monooxygenase ltbD (486 aa).

The interval 186 to 243 (PAGDGGTNDQGPSRAQSTASSGGSGRPRSTESPQSGAQASTTPTSPPTTQSTGDDPAA) is disordered. The segment covering 194-206 (DQGPSRAQSTASS) has biased composition (polar residues). The segment covering 220–241 (SGAQASTTPTSPPTTQSTGDDP) has biased composition (low complexity).

The protein belongs to the FAD-binding monooxygenase family. As to quaternary structure, homodimer. It depends on FAD as a cofactor.

Its function is as follows. Probable FAD-binding monooxygenase; part of the gene cluster that mediates the biosynthesis of luteodienoside A, a glycosylated polyketide consisting of an unusual 1-O-beta-D-glucopyranosyl-myo-inositol (glucinol) ester of 3-hydroxy-2,2,4-trimethylocta-4,6-dienoic acid. The HR-PKS ltbA produces the trimethylated polyketide chain from acetyl-CoA, malonyl-CoA and S-adenosylmethionine (SAM), and the ltbA cAT domain then uses glucinol produced by the glycosyltransferase ltbB as an offloading substrate to release luteodienoside A. Since ltbA and ltbB are sufficient for the biosynthesis of luteodienoside A, the functions of the methyltransferase ltbC and the FAD-binding monooxygenase ltbD within the pathway remain obscur. The sequence is that of Probable FAD-binding monooxygenase ltbD from Aspergillus luteorubrus.